Reading from the N-terminus, the 779-residue chain is Polyribonucleotide nucleotidyltransferase (779 aa).

2 residues coordinate Mg(2+): D490 and D496. Residues 557–618 (PHILSLKINP…EAVKARIEAV (62 aa)) form the KH domain. Residues 625-693 (GEEFEGTVVK…DRGKIDLIRP (69 aa)) enclose the S1 motif domain. Residues 699–752 (VPLREPRAPRGGDRGPRRDSDRGGDRGPRREFSDRGPRPEGARSERPEGQRTER) show a composition bias toward basic and acidic residues. A disordered region spans residues 699 to 779 (VPLREPRAPR…AAPVFPRRED (81 aa)). Residues 757 to 767 (PATQESSQSSD) are compositionally biased toward polar residues.

This sequence belongs to the polyribonucleotide nucleotidyltransferase family. Requires Mg(2+) as cofactor.

Its subcellular location is the cytoplasm. The enzyme catalyses RNA(n+1) + phosphate = RNA(n) + a ribonucleoside 5'-diphosphate. Functionally, involved in mRNA degradation. Catalyzes the phosphorolysis of single-stranded polyribonucleotides processively in the 3'- to 5'-direction. The protein is Polyribonucleotide nucleotidyltransferase of Deinococcus radiodurans (strain ATCC 13939 / DSM 20539 / JCM 16871 / CCUG 27074 / LMG 4051 / NBRC 15346 / NCIMB 9279 / VKM B-1422 / R1).